A 308-amino-acid chain; its full sequence is Cytochrome c biogenesis protein CcsA (308 aa).

A run of 7 helical transmembrane segments spans residues 2 to 22, 44 to 64, 71 to 91, 143 to 163, 212 to 232, 239 to 259, and 273 to 293; these read IVST…SILI, GMLV…IYLG, LSES…IAYF, MILG…LMVI, VIGL…VWAN, WSWD…AIYL, and AIVA…VNLV.

This sequence belongs to the CcmF/CycK/Ccl1/NrfE/CcsA family. May interact with Ccs1.

It localises to the plastid membrane. Required during biogenesis of c-type cytochromes (cytochrome c6 and cytochrome f) at the step of heme attachment. This chain is Cytochrome c biogenesis protein CcsA, found in Cuscuta exaltata (Tall dodder).